A 348-amino-acid polypeptide reads, in one-letter code: tRNA N6-adenosine threonylcarbamoyltransferase (348 aa).

Residues His-116 and His-120 each coordinate Fe cation. Substrate is bound by residues 138–142, Asp-171, Gly-184, Asp-188, and Asn-277; that span reads QVSGG. A Fe cation-binding site is contributed by Asp-309.

Belongs to the KAE1 / TsaD family. It depends on Fe(2+) as a cofactor.

It localises to the cytoplasm. It carries out the reaction L-threonylcarbamoyladenylate + adenosine(37) in tRNA = N(6)-L-threonylcarbamoyladenosine(37) in tRNA + AMP + H(+). In terms of biological role, required for the formation of a threonylcarbamoyl group on adenosine at position 37 (t(6)A37) in tRNAs that read codons beginning with adenine. Is involved in the transfer of the threonylcarbamoyl moiety of threonylcarbamoyl-AMP (TC-AMP) to the N6 group of A37, together with TsaE and TsaB. TsaD likely plays a direct catalytic role in this reaction. The chain is tRNA N6-adenosine threonylcarbamoyltransferase from Lactobacillus gasseri (strain ATCC 33323 / DSM 20243 / BCRC 14619 / CIP 102991 / JCM 1131 / KCTC 3163 / NCIMB 11718 / NCTC 13722 / AM63).